Reading from the N-terminus, the 101-residue chain is NADH-quinone oxidoreductase subunit K (101 aa).

3 helical membrane passes run 5 to 25 (LGQV…GVLL), 29 to 49 (LIMI…VLVG), and 62 to 82 (VALL…ALVV).

Belongs to the complex I subunit 4L family. In terms of assembly, NDH-1 is composed of 14 different subunits. Subunits NuoA, H, J, K, L, M, N constitute the membrane sector of the complex.

It localises to the cell inner membrane. It carries out the reaction a quinone + NADH + 5 H(+)(in) = a quinol + NAD(+) + 4 H(+)(out). NDH-1 shuttles electrons from NADH, via FMN and iron-sulfur (Fe-S) centers, to quinones in the respiratory chain. The immediate electron acceptor for the enzyme in this species is believed to be ubiquinone. Couples the redox reaction to proton translocation (for every two electrons transferred, four hydrogen ions are translocated across the cytoplasmic membrane), and thus conserves the redox energy in a proton gradient. This is NADH-quinone oxidoreductase subunit K from Syntrophotalea carbinolica (strain DSM 2380 / NBRC 103641 / GraBd1) (Pelobacter carbinolicus).